The chain runs to 336 residues: Pyridoxal 5'-phosphate synthase subunit PdxS (336 aa).

Residue D64 coordinates D-ribose 5-phosphate. K121 acts as the Schiff-base intermediate with D-ribose 5-phosphate in catalysis. Position 193 (G193) interacts with D-ribose 5-phosphate. K205 is a D-glyceraldehyde 3-phosphate binding site. D-ribose 5-phosphate contacts are provided by residues G254 and 275-276 (GS).

It belongs to the PdxS/SNZ family. As to quaternary structure, in the presence of PdxT, forms a dodecamer of heterodimers.

It carries out the reaction aldehydo-D-ribose 5-phosphate + D-glyceraldehyde 3-phosphate + L-glutamine = pyridoxal 5'-phosphate + L-glutamate + phosphate + 3 H2O + H(+). It participates in cofactor biosynthesis; pyridoxal 5'-phosphate biosynthesis. In terms of biological role, catalyzes the formation of pyridoxal 5'-phosphate from ribose 5-phosphate (RBP), glyceraldehyde 3-phosphate (G3P) and ammonia. The ammonia is provided by the PdxT subunit. Can also use ribulose 5-phosphate and dihydroxyacetone phosphate as substrates, resulting from enzyme-catalyzed isomerization of RBP and G3P, respectively. In Pyrobaculum aerophilum (strain ATCC 51768 / DSM 7523 / JCM 9630 / CIP 104966 / NBRC 100827 / IM2), this protein is Pyridoxal 5'-phosphate synthase subunit PdxS.